The primary structure comprises 278 residues: Envelope glycoprotein L (278 aa).

The signal sequence occupies residues 1–30 (MCRRPDCGFSFSPGPVILLWCCLLLPIVSS). One can recognise a gL betaherpesvirus-type domain in the interval 43 to 256 (VPAECPELTR…DKYYAGLPPE (214 aa)). Residues Cys-154 and Cys-159 are joined by a disulfide bond.

It belongs to the herpesviridae glycoprotein L (gL) family. Betaherpesvirinae gL subfamily. As to quaternary structure, interacts with glycoprotein H (gH); this interaction is necessary for the correct processing and cell surface expression of gH. Forms the envelope pentamer complex (PC) composed of gH, gL, UL128, UL130, and UL131A. The pentamer interacts with host NRP2. Forms the envelope trimer complex composed of gH, gL, and gO. The trimer interacts with host PDGFRA. The trimer also interacts with host EPHA2.

The protein localises to the virion membrane. It is found in the host cell membrane. The protein resides in the host Golgi apparatus. Its subcellular location is the host trans-Golgi network. In terms of biological role, the heterodimer glycoprotein H-glycoprotein L is required for the fusion of viral and plasma membranes leading to virus entry into the host cell. Acts as a functional inhibitor of gH and maintains gH in an inhibited form. Upon binding to host integrins, gL dissociates from gH leading to activation of the viral fusion glycoproteins gB and gH. In human cytomegalovirus, forms two distincts complexes to mediate viral entry, a trimer and a pentamer at the surface of the virion envelope. The gH-gL-gO trimer is required for infection in fibroblasts by interacting with host PDGFRA, and in glioblastoma cells by interacting with host EPHA2. The gH-gL-UL128-UL130-UL131A pentamer is essential for viral entry in epithelial, endothelial and myeloid cells via interaction with host NRP2. In Human cytomegalovirus (strain 5035) (HHV-5), this protein is Envelope glycoprotein L.